Here is a 117-residue protein sequence, read N- to C-terminus: uncharacterized protein (117 aa).

The chain crosses the membrane as a helical span at residues 1-21; that stretch reads MEIAIIALFIVSIALIAFSYS. Residues 38–67 are a coiled coil; it reads LSAMQEIYKLKKKMTVLEEELLETNLVIRK.

It localises to the cell membrane. This is an uncharacterized protein from Bacillus subtilis (strain 168).